A 105-amino-acid polypeptide reads, in one-letter code: Nucleoid-associated protein SE_2306 (105 aa).

The disordered stretch occupies residues 1 to 40 (MRGGGNMQQMMKQMQKMQKKMAQEQEKLKEERVAGTAGGG). Residues 7-16 (MQQMMKQMQK) are compositionally biased toward low complexity. Residues 21–33 (MAQEQEKLKEERV) are compositionally biased toward basic and acidic residues.

It belongs to the YbaB/EbfC family. In terms of assembly, homodimer.

It localises to the cytoplasm. It is found in the nucleoid. Functionally, binds to DNA and alters its conformation. May be involved in regulation of gene expression, nucleoid organization and DNA protection. In Staphylococcus epidermidis (strain ATCC 12228 / FDA PCI 1200), this protein is Nucleoid-associated protein SE_2306.